The following is a 217-amino-acid chain: Nucleoredoxin-like protein 1 (217 aa).

Residues 1–164 enclose the Thioredoxin domain; it reads MASLFSGRIL…AAELLDRSFL (164 aa). Residues 188–204 are compositionally biased toward basic and acidic residues; the sequence is VDRDVGRERGRNGRDSG. The interval 188-217 is disordered; sequence VDRDVGRERGRNGRDSGDPQGDAGTRAELW.

This sequence belongs to the nucleoredoxin family. Interacts with isoform 1 of BSG. As to expression, expressed in the retina (at protein level). Expressed predominantly by photoreceptors in both the inner and outer nuclear layer (at protein level). Not expressed in the testis, spleen, intestine, lung, cerebellum, or kidney.

It is found in the cell projection. The protein localises to the cilium. It localises to the photoreceptor outer segment. Its function is as follows. Plays an important role in retinal cone photoreceptor survival. In association with glucose transporter SLC16A1/GLUT1 and BSG, promotes retinal cone survival by enhancing aerobic glycolysis and accelerating the entry of glucose into photoreceptors. May play a role in cone cell viability, slowing down cone degeneration, does not seem to play a role in degenerating rods. This Mus musculus (Mouse) protein is Nucleoredoxin-like protein 1 (Nxnl1).